The sequence spans 331 residues: 6-phosphogluconolactonase (331 aa).

Lys-287 is subject to N6-acetyllysine.

It belongs to the cycloisomerase 2 family.

It carries out the reaction 6-phospho-D-glucono-1,5-lactone + H2O = 6-phospho-D-gluconate + H(+). It participates in carbohydrate degradation; pentose phosphate pathway; D-ribulose 5-phosphate from D-glucose 6-phosphate (oxidative stage): step 2/3. In terms of biological role, catalyzes the hydrolysis of 6-phosphogluconolactone to 6-phosphogluconate. This is 6-phosphogluconolactonase from Escherichia coli O8 (strain IAI1).